The primary structure comprises 495 residues: UDP-glycosyltransferase 71B7 (495 aa).

Residues serine 284, 351–353 (APQ), 368–376 (HCGWNSTLE), and 390–393 (YAEQ) contribute to the UDP-alpha-D-glucose site.

It belongs to the UDP-glycosyltransferase family.

The sequence is that of UDP-glycosyltransferase 71B7 (UGT71B7) from Arabidopsis thaliana (Mouse-ear cress).